Consider the following 506-residue polypeptide: Dual specificity protein kinase shkC (506 aa).

The interval 1-21 is disordered; it reads MDSGLGSSYPEERSGPPEIRP. Residues 10-21 show a composition bias toward basic and acidic residues; it reads PEERSGPPEIRP. The Protein kinase domain occupies 24–284; it reads INFEELIGTG…IISALDHVII (261 aa). Residues 30 to 38 and lysine 51 contribute to the ATP site; that span reads IGTGSFGKV. The active-site Proton acceptor is the aspartate 147. One can recognise an SH2 domain in the interval 396–488; sequence WFHGDLDTTE…KLDSQLGVPN (93 aa).

This sequence belongs to the protein kinase superfamily. TKL Ser/Thr protein kinase family. SH2 domain-containing protein kinase subfamily.

It localises to the membrane. It carries out the reaction L-seryl-[protein] + ATP = O-phospho-L-seryl-[protein] + ADP + H(+). It catalyses the reaction L-threonyl-[protein] + ATP = O-phospho-L-threonyl-[protein] + ADP + H(+). Functionally, required for proper chemotaxis and phagocytosis; proper spatiotemporal control of F-actin levels in chemotaxing cells. Negative regulator of the PI3K (phosphatidylinositol 3 kinase) pathway. Predominantly phosphorylates serines and threonines and tyrosines at a lower level. This is Dual specificity protein kinase shkC (shkC) from Dictyostelium discoideum (Social amoeba).